The chain runs to 342 residues: Protein-glutamate methylesterase/protein-glutamine glutaminase 4 (342 aa).

Positions 2-119 (NIGIVNDLPL…GGSADPSQPL (118 aa)) constitute a Response regulatory domain. The residue at position 53 (Asp53) is a 4-aspartylphosphate. Residues 144 to 337 (PAPQGALPPL…DQLISLVQRN (194 aa)) enclose the CheB-type methylesterase domain. Catalysis depends on residues Ser159, His186, and Asp279.

It belongs to the CheB family. Phosphorylated by CheA. Phosphorylation of the N-terminal regulatory domain activates the methylesterase activity.

Its subcellular location is the cytoplasm. The enzyme catalyses [protein]-L-glutamate 5-O-methyl ester + H2O = L-glutamyl-[protein] + methanol + H(+). The catalysed reaction is L-glutaminyl-[protein] + H2O = L-glutamyl-[protein] + NH4(+). Involved in chemotaxis. Part of a chemotaxis signal transduction system that modulates chemotaxis in response to various stimuli. Catalyzes the demethylation of specific methylglutamate residues introduced into the chemoreceptors (methyl-accepting chemotaxis proteins or MCP) by CheR. Also mediates the irreversible deamidation of specific glutamine residues to glutamic acid. The sequence is that of Protein-glutamate methylesterase/protein-glutamine glutaminase 4 from Burkholderia thailandensis (strain ATCC 700388 / DSM 13276 / CCUG 48851 / CIP 106301 / E264).